The following is a 214-amino-acid chain: MPVQVKICGINRPDALAAAVAGGARYVGLVFYERSPRHVAPELAAELARQVPTGVRVVGLFVDPDALMLERVLGSVPLDLIQLHGEETPERVAAVRAAHGIEVMKAVKVAGAADLDRAAAYEGACDRLLFDAKAPKGVAALPGGNGLSFDWTLLAGRTWARPWMLSGGLNAGNLAEAVRATGATAVDVSSGVEDRPGHKDPALVAGFLACAAAL.

Belongs to the TrpF family.

It catalyses the reaction N-(5-phospho-beta-D-ribosyl)anthranilate = 1-(2-carboxyphenylamino)-1-deoxy-D-ribulose 5-phosphate. Its pathway is amino-acid biosynthesis; L-tryptophan biosynthesis; L-tryptophan from chorismate: step 3/5. The protein is N-(5'-phosphoribosyl)anthranilate isomerase of Rhodospirillum centenum (strain ATCC 51521 / SW).